The chain runs to 271 residues: Glutamate racemase (271 aa).

Substrate is bound by residues 10 to 11 (DS) and 42 to 43 (YG). C73 serves as the catalytic Proton donor/acceptor. 74 to 75 (NT) lines the substrate pocket. Residue C183 is the Proton donor/acceptor of the active site. 184 to 185 (TH) contacts substrate.

It belongs to the aspartate/glutamate racemases family.

The enzyme catalyses L-glutamate = D-glutamate. It functions in the pathway cell wall biogenesis; peptidoglycan biosynthesis. Functionally, provides the (R)-glutamate required for cell wall biosynthesis. In Lactococcus lactis subsp. cremoris (strain SK11), this protein is Glutamate racemase.